Consider the following 211-residue polypeptide: MSHSSGTDMALNFSTASLHAWNGVSLLLIIFVTWIISGMSQAKSKIERLLICWWALTGLIHVFQEGYYVFTPDLFNDNSPNFMAEIWKEYSKGDSRYATRHTSVLGIESVASIVLGPLSLLAAYAVAKQKSYRYIFQFAISIAQLYGTIQYFLTAFLEGDNFASSRYYYYSYYVGQSSIWVIVPMLIATRYWIKIHAICKRLQDKKVTKVG.

A run of 5 helical transmembrane segments spans residues 16 to 36 (ASLH…TWII), 50 to 70 (LICW…YYVF), 104 to 124 (VLGI…LAAY), 135 to 155 (IFQF…FLTA), and 179 to 199 (IWVI…HAIC). The 143-residue stretch at 46-188 (IERLLICWWA…IWVIVPMLIA (143 aa)) folds into the EXPERA domain.

The protein belongs to the EBP family. Expressed in maturing fruits and in juice vesicles.

Its subcellular location is the membrane. It catalyses the reaction 7,8-epoxymelianol = protoglabretal. Its pathway is secondary metabolite biosynthesis; terpenoid biosynthesis. Isomerase involved in the biosynthesis of glabretanes triterpene natural products such as glabretal, a component with in vitro antiproliferative properties on lymphocytes. Catalyzes the conversion of 7,8-epoxymelianol to protoglabretal via skeletal rearrangements. The protein is Protoglabretal synthase MOI1 of Citrus sinensis (Sweet orange).